The primary structure comprises 113 residues: Large ribosomal subunit protein bL19 (113 aa).

Belongs to the bacterial ribosomal protein bL19 family.

Functionally, this protein is located at the 30S-50S ribosomal subunit interface and may play a role in the structure and function of the aminoacyl-tRNA binding site. The chain is Large ribosomal subunit protein bL19 from Corynebacterium jeikeium (strain K411).